We begin with the raw amino-acid sequence, 243 residues long: Large ribosomal subunit protein uL2 (243 aa).

Disordered stretches follow at residues 1–23 (MGKRIRPQRLGRGGPTYRAPSHR) and 204–243 (PFGGGNHQSPGKPTTIARGDPPGRKVGHIAARKTGRGGRR). Over residues 228–243 (KVGHIAARKTGRGGRR) the composition is skewed to basic residues.

It belongs to the universal ribosomal protein uL2 family. Part of the 50S ribosomal subunit. Forms a bridge to the 30S subunit in the 70S ribosome.

In terms of biological role, one of the primary rRNA binding proteins. Required for association of the 30S and 50S subunits to form the 70S ribosome, for tRNA binding and peptide bond formation. It has been suggested to have peptidyltransferase activity; this is somewhat controversial. Makes several contacts with the 16S rRNA in the 70S ribosome. In Methanopyrus kandleri (strain AV19 / DSM 6324 / JCM 9639 / NBRC 100938), this protein is Large ribosomal subunit protein uL2.